Consider the following 1342-residue polypeptide: Receptor tyrosine-protein kinase erbB-3 (1342 aa).

The signal sequence occupies residues 1 to 19; it reads MRANDALQVLGLLFSLARG. Over 20–643 the chain is Extracellular; the sequence is SEVGNSQAVC…LVLIGKTHLT (624 aa). Residues cysteine 29 and cysteine 56 are joined by a disulfide bond. An N-linked (GlcNAc...) asparagine glycan is attached at asparagine 126. 12 disulfides stabilise this stretch: cysteine 156-cysteine 183, cysteine 186-cysteine 194, cysteine 190-cysteine 202, cysteine 210-cysteine 218, cysteine 214-cysteine 226, cysteine 227-cysteine 235, cysteine 231-cysteine 243, cysteine 246-cysteine 255, cysteine 259-cysteine 286, cysteine 290-cysteine 301, cysteine 305-cysteine 320, and cysteine 323-cysteine 327. N-linked (GlcNAc...) asparagine glycosylation occurs at asparagine 250. 5 N-linked (GlcNAc...) asparagine glycosylation sites follow: asparagine 353, asparagine 408, asparagine 414, asparagine 437, and asparagine 469. Disulfide bonds link cysteine 500–cysteine 509, cysteine 504–cysteine 517, cysteine 520–cysteine 529, cysteine 533–cysteine 549, cysteine 552–cysteine 565, cysteine 556–cysteine 573, cysteine 576–cysteine 585, cysteine 589–cysteine 610, cysteine 613–cysteine 621, and cysteine 617–cysteine 629. N-linked (GlcNAc...) asparagine glycosylation occurs at asparagine 522. A glycan (N-linked (GlcNAc...) asparagine) is linked at asparagine 566. N-linked (GlcNAc...) asparagine glycosylation is present at asparagine 616. Residues 644–664 form a helical membrane-spanning segment; the sequence is MALTVIAGLVVIFMMLGGTFL. Topologically, residues 665–1342 are cytoplasmic; the sequence is YWRGRRIQNK…LFPKANAQRT (678 aa). The residue at position 686 (serine 686) is a Phosphoserine. In terms of domain architecture, Protein kinase spans 709-966; the sequence is LRKLKVLGSG…TFKELANEFT (258 aa). ATP-binding positions include 715-723, lysine 742, 788-790, and 834-839; these read LGSGVFGTV, QYL, and NLAARN. Asparagine 834 (proton acceptor) is an active-site residue. 2 disordered regions span residues 980–999 and 1033–1152; these read RESG…TNKK and LPVG…PGLE. At serine 982 the chain carries Phosphoserine. Residues 1042-1075 show a composition bias toward polar residues; the sequence is RGSQSLLSPSSGYMPMNQGNLGESCQESAVSGSS.

Belongs to the protein kinase superfamily. Tyr protein kinase family. EGF receptor subfamily. Monomer and homodimer. Heterodimer with each of the other ERBB receptors (Potential). Interacts with CSPG5. Interacts with GRB7. Interacts with MUC1. Interacts with MYOC. Interacts with isoform 2 of PA2G4. Found in a ternary complex with NRG1 and ITGAV:ITGB3 or ITGA6:ITGB4. Autophosphorylated. Ligand-binding increases phosphorylation on tyrosine residues and promotes its association with the p85 subunit of phosphatidylinositol 3-kinase. Epithelial tissues and brain.

The protein localises to the cell membrane. The protein resides in the secreted. The catalysed reaction is L-tyrosyl-[protein] + ATP = O-phospho-L-tyrosyl-[protein] + ADP + H(+). In terms of biological role, tyrosine-protein kinase that plays an essential role as cell surface receptor for neuregulins. Binds to neuregulin-1 (NRG1) and is activated by it; ligand-binding increases phosphorylation on tyrosine residues and promotes its association with the p85 subunit of phosphatidylinositol 3-kinase. May also be activated by CSPG5. Involved in the regulation of myeloid cell differentiation. This Homo sapiens (Human) protein is Receptor tyrosine-protein kinase erbB-3 (ERBB3).